Here is an 862-residue protein sequence, read N- to C-terminus: Fork head protein homolog 2 (862 aa).

Positions 83–152 (VSIGRNTDPL…NGAKVNFQRT (70 aa)) constitute an FHA domain. The fork-head DNA-binding region spans 339–430 (VKPPHSYATM…QQEFLNKWNT (92 aa)). Disordered regions lie at residues 498–528 (PSKG…QEQR), 611–663 (SDSA…GTTT), 698–730 (PERG…LQTS), and 750–846 (ESNN…ANAK). A compositionally biased stretch (low complexity) spans 504–520 (PASQQSQPPVSHQNQSQ). The segment covering 611–644 (SDSADKSTNNNGGTKMNLPAISTSSLDENGNLEP) has biased composition (polar residues). The span at 645 to 655 (TTTTSSGNSNS) shows a compositional bias: low complexity. Ser-708 carries the phosphoserine modification. Low complexity predominate over residues 712–726 (SNSNNTNNNGANNSN). Composition is skewed to polar residues over residues 750–770 (ESNN…NVKS) and 778–788 (LQFSSTNNTPA). A compositionally biased stretch (basic and acidic residues) spans 804–829 (IKAKENENATSEKDSDSNSNDLETKD). Over residues 830–844 (INSSPLKNQGGSTAN) the composition is skewed to polar residues. Residues Ser-832 and Ser-833 each carry the phosphoserine modification.

As to quaternary structure, interacts with MCM1. Interacts with NDD1. Interacts with the origin recognition complex (ORC) composed of ORC1 to ORC6.

It localises to the nucleus. The protein resides in the cytoplasm. The protein localises to the cytosol. In terms of biological role, transcription factor that regulates the expression of the CLB2 cluster of genes during the G2/M phase of the mitotic cell cycle. The CLB2 cluster of genes includes mitotic regulators such as CLB1, CLB2, CDC5 and CDC20 as well as SWI5 and ACE2, transcription factors required for the subsequent temporal wave of cell cycle regulated gene expression in the M/G1 phase interval. Involved in HMRa silencing. FKH1 and FKH2 associate with the coding regions of active genes and influence, in opposing ways, transcriptional elongation and termination, and coordinate early transcription elongation and pre-mRNA processing. Both FKH1 and FKH2 play a role as regulators of lifespan in collaboration with the anaphase-promoting complex (APC), likely through combined regulation of stress response, genomic stability, and cell cycle regulation. FKH1 and FKH2 function also in controlling yeast cell morphology by preventing preudohyphal growth. Acts as a rate-limiting replication origin activator via its interaction with the origin recognition complex (ORC). This is Fork head protein homolog 2 from Saccharomyces cerevisiae (strain ATCC 204508 / S288c) (Baker's yeast).